The chain runs to 381 residues: Arogenate dehydratase/prephenate dehydratase 2, chloroplastic (381 aa).

Positions 1–32 (MAMHTVRLSPATQLHGGISSNLSPPNRKPNNS) are disordered. Residues 1 to 66 (MAMHTVRLSP…DANGRDNSVR (66 aa)) constitute a chloroplast transit peptide. Residues 18 to 32 (ISSNLSPPNRKPNNS) are compositionally biased toward polar residues. The region spanning 100–275 (RVAYQGVRGA…NVTRFLMLAR (176 aa)) is the Prephenate dehydratase domain. Positions 289–375 (SIVFSLEEGP…TFLRVLGSYP (87 aa)) constitute an ACT domain.

In terms of tissue distribution, expressed in roots, leaves, stems, flowers and siliques. Most abundant in leaves and seeds.

The protein localises to the plastid. It localises to the chloroplast stroma. It carries out the reaction L-arogenate + H(+) = L-phenylalanine + CO2 + H2O. The enzyme catalyses prephenate + H(+) = 3-phenylpyruvate + CO2 + H2O. It functions in the pathway amino-acid biosynthesis; L-phenylalanine biosynthesis; L-phenylalanine from L-arogenate: step 1/1. It participates in amino-acid biosynthesis; L-phenylalanine biosynthesis; phenylpyruvate from prephenate: step 1/1. Its function is as follows. Converts the prephenate produced from the shikimate-chorismate pathway into phenylalanine. Dehydratase that uses arogenate and prephenate as substrates. Utilzes more efficiently arogenate than prephenate. Required for chloroplast division prior to ARC5, but in an ARC3- and ARC6-dependent manner, especially involved in the Z-ring formation. The protein is Arogenate dehydratase/prephenate dehydratase 2, chloroplastic of Arabidopsis thaliana (Mouse-ear cress).